The following is a 227-amino-acid chain: Uracil-DNA glycosylase (227 aa).

Aspartate 64 serves as the catalytic Proton acceptor.

This sequence belongs to the uracil-DNA glycosylase (UDG) superfamily. UNG family.

The protein localises to the cytoplasm. The catalysed reaction is Hydrolyzes single-stranded DNA or mismatched double-stranded DNA and polynucleotides, releasing free uracil.. Its function is as follows. Excises uracil residues from the DNA which can arise as a result of misincorporation of dUMP residues by DNA polymerase or due to deamination of cytosine. This chain is Uracil-DNA glycosylase, found in Serratia proteamaculans (strain 568).